The primary structure comprises 419 residues: MSKKLALFGGTPVRNEEFYDGPHIGPHDLDRLKSVLDSGNFGGIPFPNTHHTAFADLFTGKLGAPYGLMVSNGTISLSIALRALGVRAGDEVITTGYTWMGTAAAIVHINAVPVLVDIDPTTWCIDPAAVEAAITPRTKVIVPVHLGNQIADLDALRAIADKHGLAILEDTAHGHFAEWRGQCVGTHGDAGSFSFESSKIMTAGEGGFLVARDEDVYQRMMSLANCGRKEPGYDGFAGRTLGWNARASELQAAFMIGQVEQHDALHAKRAASAAKLTAGLAEIGGFTPVGNDDPRITRRQYYEVIYRFDPAAWEGLHRDEVLSAILAEGIELEGDAFYPPVHKSELFAVDAVHWPMIAERYGDRIGPDSVDLPVADRAAADESVWVHHALLTGDDKDLGDILEAVAKVRDNLRELHDAS.

Lys199 carries the N6-(pyridoxal phosphate)lysine modification.

This sequence belongs to the DegT/DnrJ/EryC1 family. L-glutamine:2-deoxy-scyllo-inosose/scyllo-inosose aminotransferase subfamily. Requires pyridoxal 5'-phosphate as cofactor.

It carries out the reaction 3-amino-2,3-dideoxy-scyllo-inosose + L-glutamine = 2-deoxystreptamine + 2-oxoglutaramate. It functions in the pathway metabolic intermediate biosynthesis; 2-deoxystreptamine biosynthesis; 2-deoxystreptamine from D-glucose 6-phosphate: step 4/4. Its pathway is antibiotic biosynthesis; kanamycin biosynthesis. Catalyzes the transamination of 3-amino-2,3-dideoxy-scyllo-inosose (amino-DOI) into 2-deoxystreptamine (DOS). This chain is Putative L-glutamine:3-amino-2,3-dideoxy-scyllo-inosose aminotransferase (kanD), found in Streptomyces kanamyceticus.